The chain runs to 300 residues: Putative S-adenosyl-L-methionine-dependent methyltransferase MMAR_1058 (300 aa).

S-adenosyl-L-methionine is bound by residues D127 and 156–157 (DL).

It belongs to the UPF0677 family.

Functionally, exhibits S-adenosyl-L-methionine-dependent methyltransferase activity. This chain is Putative S-adenosyl-L-methionine-dependent methyltransferase MMAR_1058, found in Mycobacterium marinum (strain ATCC BAA-535 / M).